A 176-amino-acid chain; its full sequence is ATP-dependent protease subunit HslV (176 aa).

The active site involves Thr-2. Na(+) is bound by residues Gly-157, Cys-160, and Thr-163.

The protein belongs to the peptidase T1B family. HslV subfamily. A double ring-shaped homohexamer of HslV is capped on each side by a ring-shaped HslU homohexamer. The assembly of the HslU/HslV complex is dependent on binding of ATP.

It localises to the cytoplasm. It carries out the reaction ATP-dependent cleavage of peptide bonds with broad specificity.. With respect to regulation, allosterically activated by HslU binding. Its function is as follows. Protease subunit of a proteasome-like degradation complex believed to be a general protein degrading machinery. In Pectobacterium atrosepticum (strain SCRI 1043 / ATCC BAA-672) (Erwinia carotovora subsp. atroseptica), this protein is ATP-dependent protease subunit HslV.